A 377-amino-acid chain; its full sequence is Trans-enoyl reductase FMN2 (377 aa).

Residues 7–370 (NASGGYCLNS…DGVIRGKKLV (364 aa)) form the Enoyl reductase (ER) domain. Residues 143–173 (LSDMTGNGRSNGYTNGHTNGHTNGHSKGEEE) are disordered. Polar residues predominate over residues 144–155 (SDMTGNGRSNGY). Residues 156–167 (TNGHTNGHTNGH) show a composition bias toward low complexity. Residues 186 to 189 (ASAS), 209 to 212 (SPAN), Tyr227, and 274 to 275 (LD) contribute to the NADP(+) site.

The protein belongs to the zinc-containing alcohol dehydrogenase family.

It participates in secondary metabolite biosynthesis. Its function is as follows. Trans-enoyl reductase; part of the gene cluster that mediates the biosynthesis of fusamarins, isocoumarin derivatives that show moderate cytotoxicity with IC(50) values between 1 and 50 uM. The polyketide synthase FMN1 probably synthesizes two different polyketides, a tetra- and a pentaketide, containinga varying number of double bonds depending on the selective actions of the trans-enoyl reductase FMN2. Chain fusion will presumably be mediated by the KS domain before finally offloading is catalyzed by the alpha/beta hydrolase fold enzyme FMN3. This chain is Trans-enoyl reductase FMN2, found in Fusarium mangiferae (Mango malformation disease fungus).